The chain runs to 727 residues: Glucans biosynthesis glucosyltransferase H (727 aa).

Residues 18-38 (SAMPNERPGAMEPQNLSKMPE) form a disordered region. Helical transmembrane passes span 58–78 (FLVV…MGAV), 97–117 (VNFC…LILL), 278–298 (LQQF…GWWV), 408–428 (IMAY…LMLA), 460–480 (LFYI…LLLL), 496–516 (IFSV…MMFI), and 572–592 (LLAW…ISAW).

This sequence belongs to the glycosyltransferase 2 family. OpgH subfamily.

Its subcellular location is the cell inner membrane. Its pathway is glycan metabolism; osmoregulated periplasmic glucan (OPG) biosynthesis. Functionally, involved in the biosynthesis of osmoregulated periplasmic glucans (OPGs). This Shewanella baltica (strain OS185) protein is Glucans biosynthesis glucosyltransferase H.